The chain runs to 411 residues: Floricaula/leafy-like protein (411 aa).

Residues 220-259 (PDTNYGSEQTKACKKQKRRRSKDSGEDGEERQREHPFIVT) form a disordered region. The segment covering 231–240 (ACKKQKRRRS) has biased composition (basic residues). Residues 241–255 (KDSGEDGEERQREHP) show a composition bias toward basic and acidic residues. DNA-binding regions lie at residues 252–256 (REHPF), 321–328 (NKPKMRHY), and 392–395 (YVPT).

The protein belongs to the FLO/LFY family. In terms of tissue distribution, expressed in vegetative buds and male cones but not in female cones, vascular tissue, roots or secondary needles.

It localises to the nucleus. Functionally, probable transcription factor. This Pinus radiata (Monterey pine) protein is Floricaula/leafy-like protein (FLL).